The sequence spans 392 residues: MKPFARRALLTAEPIRALLLAASLLAATLGLMPAEAFGASRIKDIADFEGVRDNMLVGYGLVVGLNSTGDSLTNAPFTKESLTGMLERLGVNIRDKTGAISSQLTPKNVAAVMITATLPPFSRQGTRIDINVSAMGDAKDLRGGTLLVTPLIGADGEVYAVGQGQVATGGFTASGASGSSVTKGVPTAGRIANGAIVERELPFEMSHLESVKVSLRNPDFTTSRRIAQAINSFLGGDMARPVDPGTVQIAVPPGYRGNVVGLLTDVEQLRVEPDQMARVVVDEVSGTIVMGENVRISTVAIAQGQLTIRITETPQVSQPSPFSDAGTTTTVQRTDIQVDEGAGNKLAVVPHKVTLQELVEGLNSLGIGPRDLITILQAIKAAGALQAELEVL.

An N-terminal signal peptide occupies residues 1–38; the sequence is MKPFARRALLTAEPIRALLLAASLLAATLGLMPAEAFG.

This sequence belongs to the FlgI family. As to quaternary structure, the basal body constitutes a major portion of the flagellar organelle and consists of four rings (L,P,S, and M) mounted on a central rod.

It is found in the periplasm. The protein resides in the bacterial flagellum basal body. Functionally, assembles around the rod to form the L-ring and probably protects the motor/basal body from shearing forces during rotation. This Paramagnetospirillum magneticum (strain ATCC 700264 / AMB-1) (Magnetospirillum magneticum) protein is Flagellar P-ring protein.